A 242-amino-acid chain; its full sequence is Probable transcriptional regulatory protein Cphy_2507 (242 aa).

The protein belongs to the TACO1 family.

Its subcellular location is the cytoplasm. In Lachnoclostridium phytofermentans (strain ATCC 700394 / DSM 18823 / ISDg) (Clostridium phytofermentans), this protein is Probable transcriptional regulatory protein Cphy_2507.